The sequence spans 77 residues: MKEQKWIHEGLITESLPNGMFRIRLDNEDMILGYVSGKIRRSFIRILPGDRVKIEVSRYDSTRGRIIYRLRNKNSKD.

Residues 1–71 (MKEQKWIHEG…TRGRIIYRLR (71 aa)) form the S1-like domain.

This sequence belongs to the IF-1 family. In terms of assembly, component of the 30S ribosomal translation pre-initiation complex which assembles on the 30S ribosome in the order IF-2 and IF-3, IF-1 and N-formylmethionyl-tRNA(fMet); mRNA recruitment can occur at any time during PIC assembly.

Its subcellular location is the plastid. The protein localises to the chloroplast. One of the essential components for the initiation of protein synthesis. Stabilizes the binding of IF-2 and IF-3 on the 30S subunit to which N-formylmethionyl-tRNA(fMet) subsequently binds. Helps modulate mRNA selection, yielding the 30S pre-initiation complex (PIC). Upon addition of the 50S ribosomal subunit IF-1, IF-2 and IF-3 are released leaving the mature 70S translation initiation complex. This Hedera helix (English ivy) protein is Translation initiation factor IF-1, chloroplastic.